Here is a 359-residue protein sequence, read N- to C-terminus: Alanine racemase (359 aa).

The active-site Proton acceptor; specific for D-alanine is the lysine 34. N6-(pyridoxal phosphate)lysine is present on lysine 34. Residue arginine 129 coordinates substrate. The active-site Proton acceptor; specific for L-alanine is the tyrosine 256. Position 304 (methionine 304) interacts with substrate.

It belongs to the alanine racemase family. The cofactor is pyridoxal 5'-phosphate.

It carries out the reaction L-alanine = D-alanine. It participates in amino-acid biosynthesis; D-alanine biosynthesis; D-alanine from L-alanine: step 1/1. Functionally, catalyzes the interconversion of L-alanine and D-alanine. May also act on other amino acids. In Photobacterium profundum (strain SS9), this protein is Alanine racemase (alr).